The primary structure comprises 186 residues: TATA-box-binding protein B (186 aa).

2 repeat units span residues 10-86 (IENV…FGDI) and 101-179 (VQNI…QDRL).

It belongs to the TBP family.

General factor that plays a role in the activation of archaeal genes transcribed by RNA polymerase. Binds specifically to the TATA box promoter element which lies close to the position of transcription initiation. The chain is TATA-box-binding protein B (tbpB1) from Halobacterium salinarum (strain ATCC 700922 / JCM 11081 / NRC-1) (Halobacterium halobium).